Here is a 944-residue protein sequence, read N- to C-terminus: Isoleucine--tRNA ligase (944 aa).

The short motif at 58-68 is the 'HIGH' region element; the sequence is PYANGSIHIGH. Residue Glu563 participates in L-isoleucyl-5'-AMP binding. The 'KMSKS' region motif lies at 604 to 608; the sequence is KMSKS. ATP is bound at residue Lys607. Residues Cys907, Cys910, Cys927, and Cys930 each contribute to the Zn(2+) site.

The protein belongs to the class-I aminoacyl-tRNA synthetase family. IleS type 1 subfamily. As to quaternary structure, monomer. Zn(2+) serves as cofactor.

The protein resides in the cytoplasm. The enzyme catalyses tRNA(Ile) + L-isoleucine + ATP = L-isoleucyl-tRNA(Ile) + AMP + diphosphate. Its function is as follows. Catalyzes the attachment of isoleucine to tRNA(Ile). As IleRS can inadvertently accommodate and process structurally similar amino acids such as valine, to avoid such errors it has two additional distinct tRNA(Ile)-dependent editing activities. One activity is designated as 'pretransfer' editing and involves the hydrolysis of activated Val-AMP. The other activity is designated 'posttransfer' editing and involves deacylation of mischarged Val-tRNA(Ile). In Salmonella choleraesuis (strain SC-B67), this protein is Isoleucine--tRNA ligase.